The following is a 173-amino-acid chain: RNA pyrophosphohydrolase (173 aa).

The Nudix hydrolase domain maps to 6–149 (GFRANVGIIL…KRGVYRRALQ (144 aa)). The Nudix box signature appears at 38–59 (GGIDRGETPMDAMYRELWEEVG).

It belongs to the Nudix hydrolase family. RppH subfamily. A divalent metal cation serves as cofactor.

In terms of biological role, accelerates the degradation of transcripts by removing pyrophosphate from the 5'-end of triphosphorylated RNA, leading to a more labile monophosphorylated state that can stimulate subsequent ribonuclease cleavage. This is RNA pyrophosphohydrolase from Psychrobacter arcticus (strain DSM 17307 / VKM B-2377 / 273-4).